The chain runs to 313 residues: MEIQFLGTGAGVPAKHRNVTGIALKLLDERNAVWLFDCGEGTQLQILKSSIRPRKIEKIFITHLHGDHIFGLPGLLSSRSFQGGTEPLEIYGPVGIADFVKTSLRVSQSRLSYPLKFIELTKENDVIFKDKQFTVRCNILDHGITSFGYRIEEAAHEGELQVEKLQALGIPSGPLYGKLKRGETIVFDGQEINGQAFVGERKPGRIVTILGDTRKTKNSVTLARRADVLVHESTFNKHEAKMAKAYFHSTSQQAAEVAKEAQVKQLILTHISARYLTKEAYQLQEEAQEIFPNTKIVKDMDIIEIPFANEGGA.

7 residues coordinate Zn(2+): His-63, His-65, Asp-67, His-68, His-142, Asp-212, and His-270. Catalysis depends on Asp-67, which acts as the Proton acceptor.

It belongs to the RNase Z family. Homodimer. Requires Zn(2+) as cofactor.

The catalysed reaction is Endonucleolytic cleavage of RNA, removing extra 3' nucleotides from tRNA precursor, generating 3' termini of tRNAs. A 3'-hydroxy group is left at the tRNA terminus and a 5'-phosphoryl group is left at the trailer molecule.. Its function is as follows. Zinc phosphodiesterase, which displays some tRNA 3'-processing endonuclease activity. Probably involved in tRNA maturation, by removing a 3'-trailer from precursor tRNA. The chain is Ribonuclease Z from Enterococcus faecalis (strain ATCC 700802 / V583).